The sequence spans 344 residues: Protein RecA (344 aa).

Residue 66–73 (GPESSGKT) participates in ATP binding.

Belongs to the RecA family.

Its subcellular location is the cytoplasm. In terms of biological role, can catalyze the hydrolysis of ATP in the presence of single-stranded DNA, the ATP-dependent uptake of single-stranded DNA by duplex DNA, and the ATP-dependent hybridization of homologous single-stranded DNAs. It interacts with LexA causing its activation and leading to its autocatalytic cleavage. In Methylobacillus flagellatus, this protein is Protein RecA.